We begin with the raw amino-acid sequence, 130 residues long: Small ribosomal subunit protein uS9 (130 aa).

Belongs to the universal ribosomal protein uS9 family.

This chain is Small ribosomal subunit protein uS9, found in Variovorax paradoxus (strain S110).